Consider the following 872-residue polypeptide: FHIP family protein CBG19667 (872 aa).

The disordered stretch occupies residues 800 to 841 (SRSSPRSADEHDSTLFYGRSTIPPPGRKPLLREPSHQETLDD). A compositionally biased stretch (basic and acidic residues) spans 829 to 841 (LLREPSHQETLDD).

The protein belongs to the FHIP family.

The protein is FHIP family protein CBG19667 of Caenorhabditis briggsae.